A 345-amino-acid polypeptide reads, in one-letter code: Anthranilate phosphoribosyltransferase (345 aa).

5-phospho-alpha-D-ribose 1-diphosphate contacts are provided by residues glycine 84, 87–88 (GD), threonine 92, 94–97 (NIST), 112–120 (KHGNRSVSS), and serine 124. Residue glycine 84 participates in anthranilate binding. Mg(2+) is bound at residue serine 96. Asparagine 115 provides a ligand contact to anthranilate. Arginine 170 serves as a coordination point for anthranilate. Residues aspartate 229 and glutamate 230 each coordinate Mg(2+).

It belongs to the anthranilate phosphoribosyltransferase family. In terms of assembly, homodimer. Mg(2+) serves as cofactor.

It carries out the reaction N-(5-phospho-beta-D-ribosyl)anthranilate + diphosphate = 5-phospho-alpha-D-ribose 1-diphosphate + anthranilate. It functions in the pathway amino-acid biosynthesis; L-tryptophan biosynthesis; L-tryptophan from chorismate: step 2/5. Its function is as follows. Catalyzes the transfer of the phosphoribosyl group of 5-phosphorylribose-1-pyrophosphate (PRPP) to anthranilate to yield N-(5'-phosphoribosyl)-anthranilate (PRA). In Xanthomonas campestris pv. campestris (strain 8004), this protein is Anthranilate phosphoribosyltransferase.